Consider the following 262-residue polypeptide: Lectin (262 aa).

Residues 1-21 (MASSVLLVLSLFLVLLLTQAS) form the signal peptide. N-linked (GlcNAc...) asparagine glycans are attached at residues asparagine 53, asparagine 82, asparagine 100, asparagine 129, and asparagine 205.

The protein belongs to the leguminous lectin family.

This metalloglycoprotein, containing Ca(2+), Mn(2+), binds glycoconjugates containing terminal non-reducing alpha-D-GalNAc residues. The protein is Lectin of Phaseolus lunatus (Lima bean).